Reading from the N-terminus, the 71-residue chain is Large ribosomal subunit protein bL31 (71 aa).

4 residues coordinate Zn(2+): cysteine 16, cysteine 18, cysteine 38, and cysteine 41.

It belongs to the bacterial ribosomal protein bL31 family. Type A subfamily. As to quaternary structure, part of the 50S ribosomal subunit. Zn(2+) is required as a cofactor.

Its function is as follows. Binds the 23S rRNA. This is Large ribosomal subunit protein bL31 from Francisella tularensis subsp. novicida (strain U112).